A 483-amino-acid polypeptide reads, in one-letter code: MAKNNTNRHYSLRKLKKGTASVAVALSVIGAGLVVNTNEVSARVFPRGTVENPDKARELLNKYDVENSMLQANNDKLTTENNNLTDQNKNLTTENKNLTDQNKNLTTENKNLTDQNKNLTTENKELKAEENRLTTENKGLTKKLSEAEEEAANKERENKEAIGTLKKTLDETVKDKIAKEQESKETIGTLKKTLDETVKDKIAKEQESKETIGTLKKTLDETVKDKIAKEQESKETIGTLKKILDETVKDKIAREQKSKQDIGALKQELAKKDEGNKVSEASRKGLRRDLDASREAKKQVEKDLANLTAELDKVKEEKQISDASRQGLRRDLDASREAKKQVEKALEEANSKLAALEKLNKELEESKKLTEKEKAELQAKLEAEAKALKEQLAKQAEELAKLRAGKASDSQTPDAKPGNKVVPGKGQAPQAGTKPNQNKAPMKETKRQLPSTGETANPFFTAAALTVMATAGVAAVVKRKEEN.

The first 42 residues, 1 to 42 (MAKNNTNRHYSLRKLKKGTASVAVALSVIGAGLVVNTNEVSA), serve as a signal peptide directing secretion. Residues 54–171 (DKARELLNKY…IGTLKKTLDE (118 aa)) adopt a coiled-coil conformation. 8 repeat units span residues 69–75 (MLQANND), 76–82 (KLTTENN), 83–89 (NLTDQNK), 90–96 (NLTTENK), 97–103 (NLTDQNK), 104–110 (NLTTENK), 111–117 (NLTDQNK), and 118–124 (NLTTENK). The 10 X 7 AA approximate tandem repeats of [KMNR]-L-[TQ]-[TDA]-[ENQ]-N-[NDK] stretch occupies residues 69-138 (MLQANNDKLT…EENRLTTENK (70 aa)). The span at 74–87 (NDKLTTENNNLTDQ) shows a compositional bias: polar residues. A disordered region spans residues 74–157 (NDKLTTENNN…EEEAANKERE (84 aa)). Low complexity predominate over residues 88-113 (NKNLTTENKNLTDQNKNLTTENKNLT). Basic and acidic residues-rich tracts occupy residues 122 to 135 (ENKELKAEENRLTT) and 143 to 157 (KLSEAEEEAANKERE). One copy of the 9-1; approximate repeat lies at 125–131 (ELKAEEN). Repeat copies occupy residues 132–138 (RLTTENK), 157–181 (ENKEAIGTLKKTLDETVKDKIAKEQ), 182–206 (ESKETIGTLKKTLDETVKDKIAKEQ), 207–231 (ESKETIGTLKKTLDETVKDKIAKEQ), and 232–256 (ESKETIGTLKKILDETVKDKIAREQ). The 4.5 X 25 AA tandem repeats of E-[NS]-K-E-[TA]-I-G-T-L-K-K-[TI]-L-D-E-T-V-K-D-K-I-A-[KR]-E-Q stretch occupies residues 157 to 269 (ENKEAIGTLK…QDIGALKQEL (113 aa)). 2 disordered regions span residues 255–298 (EQKS…EAKK) and 314–345 (VKEEKQISDASRQGLRRDLDASREAKKQVEKA). The 5-2; truncated repeat unit spans residues 257 to 269 (KSKQDIGALKQEL). Composition is skewed to basic and acidic residues over residues 268-298 (ELAKKDEGNKVSEASRKGLRRDLDASREAKK) and 328-345 (LRRDLDASREAKKQVEKA). C repeat units follow at residues 270–304 (AKKDEGNKVSEASRKGLRRDLDASREAKKQVEKDL) and 312–346 (DKVKEEKQISDASRQGLRRDLDASREAKKQVEKAL). The segment at 279–347 (SEASRKGLRR…AKKQVEKALE (69 aa)) is binding to CD46. Residues 279-347 (SEASRKGLRR…AKKQVEKALE (69 aa)) form a two directly repeated 27 amino acid blocks separated by 15 amino acids region. Residues 280–408 (EASRKGLRRD…LAKLRAGKAS (129 aa)) are a coiled coil. Residues 348–411 (EANSKLAALE…LRAGKASDSQ (64 aa)) are hydrophilic. D repeat units follow at residues 379 to 384 (AKLEAE), 385 to 390 (AKALKE), 393 to 398 (AKQAEE), and 400 to 405 (AKLRAG). Residues 400-455 (AKLRAGKASDSQTPDAKPGNKVVPGKGQAPQAGTKPNQNKAPMKETKRQLPSTGET) are disordered. The short motif at 449–453 (LPSTG) is the LPXTG sorting signal element. Thr-452 is subject to Pentaglycyl murein peptidoglycan amidated threonine. Positions 453–483 (GETANPFFTAAALTVMATAGVAAVVKRKEEN) are cleaved as a propeptide — removed by sortase.

It belongs to the M protein family.

The protein localises to the secreted. The protein resides in the cell wall. Its function is as follows. Mediates the attachment of S.pyogenes to skin epithelial cells through the binding of the human membrane cofactor protein CD46. Also binds to the factor H and factor H-like protein 1. These interactions could contribute to the fact that the M6 protein protects the bacterium from the phagocytosis by regulating the complement activation on the bacterial surface. The protein is M protein, serotype 6 (emm6) of Streptococcus pyogenes.